The sequence spans 384 residues: Transcription factor TGA3 (384 aa).

2 disordered regions span residues 36 to 70 (KSDINNITSNQNNNQSSSTTLEVDARPEADDNNRV) and 76 to 95 (YNNSLEAEPSSNNDQDEDRI). The segment covering 39–55 (INNITSNQNNNQSSSTT) has biased composition (low complexity). Residues 58 to 68 (VDARPEADDNN) are compositionally biased toward basic and acidic residues. The segment covering 76–88 (YNNSLEAEPSSNN) has biased composition (polar residues). Positions 96–138 (NDKMKRRLAQNREAARKSRLRKKAHVQQLEESRLKLSQLEQEL) constitute a bZIP domain. Positions 98–118 (KMKRRLAQNREAARKSRLRKK) are basic motif. The short motif at 99–106 (MKRRLAQN) is the Nuclear localization signal element. A coiled-coil region spans residues 117-144 (KKAHVQQLEESRLKLSQLEQELVRARQQ). A leucine-zipper region spans residues 124–138 (LEESRLKLSQLEQEL). Residues 167–379 (IAAFEMEYTH…RALSSLWAAR (213 aa)) form the DOG1 domain. Positions 219, 236, and 249 each coordinate hexadecanoate. Positions 267-296 (DQQLLEVRNLQQSSQQAEEALSQGLDKLQQ) form a coiled coil.

This sequence belongs to the bZIP family. In terms of assembly, binds DNA as a dimer. Interacts with NPR3, NPR4 and sumoylated NPR1. Interacts with GRXC7/ROXY1. In terms of tissue distribution, expressed in the whole plant.

Its subcellular location is the nucleus. In terms of biological role, transcriptional activator that binds specifically to the DNA sequence 5'-TGACG-3'. Recognizes ocs elements like the as-1 motif of the cauliflower mosaic virus 35S promoter. Binding to the as-1-like cis elements mediate auxin- and salicylic acid-inducible transcription. Required to induce the systemic acquired resistance (SAR) via the regulation of pathogenesis-related genes expression. Binding to the as-1 element of PR-1 promoter is salicylic acid-inducible and mediated by sumoylated NPR1. Could also bind to the Hex-motif (5'-TGACGTGG-3') another cis-acting element found in plant histone promoters. The chain is Transcription factor TGA3 from Arabidopsis thaliana (Mouse-ear cress).